The chain runs to 227 residues: Adapter protein MecA 1 (227 aa).

This sequence belongs to the MecA family. As to quaternary structure, homodimer.

Its function is as follows. Enables the recognition and targeting of unfolded and aggregated proteins to the ClpC protease or to other proteins involved in proteolysis. Acts negatively in the development of competence by binding ComK and recruiting it to the ClpCP protease. When overexpressed, inhibits sporulation. Also involved in Spx degradation by ClpC. The protein is Adapter protein MecA 1 (mecA1) of Bacillus anthracis.